A 181-amino-acid chain; its full sequence is Inner membrane-spanning protein YciB (181 aa).

5 helical membrane passes run 3-23 (LLFDFFPIVLFFIVYKFFGIY), 54-74 (SLAIIMVLGGATLFFQNPWFI), 81-101 (IYWLSALVFYGSSYIGSKPLI), 119-139 (LNLAWTLFFIVMGALNLYVAY), and 149-169 (FKLFGGVGFTLLFVLIQAFYL).

This sequence belongs to the YciB family.

It is found in the cell inner membrane. Its function is as follows. Plays a role in cell envelope biogenesis, maintenance of cell envelope integrity and membrane homeostasis. The polypeptide is Inner membrane-spanning protein YciB (Legionella pneumophila subsp. pneumophila (strain Philadelphia 1 / ATCC 33152 / DSM 7513)).